Consider the following 311-residue polypeptide: p-hydroxybenzoic acid efflux pump subunit AaeA (311 aa).

A helical membrane pass occupies residues Ile-11–Phe-31.

It belongs to the membrane fusion protein (MFP) (TC 8.A.1) family.

It is found in the cell inner membrane. Functionally, forms an efflux pump with AaeB. The polypeptide is p-hydroxybenzoic acid efflux pump subunit AaeA (Yersinia enterocolitica serotype O:8 / biotype 1B (strain NCTC 13174 / 8081)).